We begin with the raw amino-acid sequence, 278 residues long: 4-deoxy-L-threo-5-hexosulose-uronate ketol-isomerase (278 aa).

Zn(2+) contacts are provided by His-196, His-198, Glu-203, and His-245.

This sequence belongs to the KduI family. The cofactor is Zn(2+).

It catalyses the reaction 5-dehydro-4-deoxy-D-glucuronate = 3-deoxy-D-glycero-2,5-hexodiulosonate. It participates in glycan metabolism; pectin degradation; 2-dehydro-3-deoxy-D-gluconate from pectin: step 4/5. Its function is as follows. Catalyzes the isomerization of 5-dehydro-4-deoxy-D-glucuronate to 3-deoxy-D-glycero-2,5-hexodiulosonate. In Shigella flexneri, this protein is 4-deoxy-L-threo-5-hexosulose-uronate ketol-isomerase.